Here is a 151-residue protein sequence, read N- to C-terminus: Zinc finger HIT domain-containing protein 3 (151 aa).

Zn(2+) contacts are provided by Cys-11, Cys-14, Cys-22, Cys-25, Cys-30, Cys-34, His-38, and Cys-42. The segment at 11-42 (CVVCLEKPKYRCPTCRVPYCSVPCFQKHKEQC) adopts an HIT-type zinc-finger fold. A compositionally biased stretch (basic and acidic residues) spans 43 to 53 (SSEARPVEKRR). Residues 43 to 81 (SSEARPVEKRRAGPPVRSEESKDDDSSVADFLNSDEEED) are disordered. Residues 63–81 (SKDDDSSVADFLNSDEEED) are compositionally biased toward acidic residues. Ser-76 carries the post-translational modification Phosphoserine.

In terms of assembly, thyroid receptor interacting proteins (TRIPs) specifically interact with the ligand binding domain of the thyroid receptor (TR). Requires the presence of thyroid hormone for its interaction. Interacts with NUFIP1. Interacts (via HIT-type zinc finger) with the RUVBL1/RUVBL2 complex in the presence of ADP. As to expression, expressed in the cerebellum.

The protein resides in the cytoplasm. Its subcellular location is the nucleus. This Mus musculus (Mouse) protein is Zinc finger HIT domain-containing protein 3 (Znhit3).